Reading from the N-terminus, the 147-residue chain is Acidic phospholipase A2 1 (147 aa).

A signal peptide spans 1 to 19 (MNPAHLLVLAAVCVSLLGA). A propeptide spanning residues 20-27 (AIVPPQPL) is cleaved from the precursor. 7 disulfides stabilise this stretch: C38–C99, C54–C146, C56–C72, C71–C127, C78–C120, C88–C113, and C106–C118. 3 residues coordinate Ca(2+): Y55, G57, and G59. H75 is a catalytic residue. D76 serves as a coordination point for Ca(2+). D121 is a catalytic residue.

The protein belongs to the phospholipase A2 family. Group I subfamily. D49 sub-subfamily. The cofactor is Ca(2+). In terms of tissue distribution, expressed by the venom gland.

The protein resides in the secreted. It carries out the reaction a 1,2-diacyl-sn-glycero-3-phosphocholine + H2O = a 1-acyl-sn-glycero-3-phosphocholine + a fatty acid + H(+). PLA2 catalyzes the calcium-dependent hydrolysis of the 2-acyl groups in 3-sn-phosphoglycerides. The sequence is that of Acidic phospholipase A2 1 from Bungarus flaviceps flaviceps (Red-headed krait).